The chain runs to 160 residues: Major strawberry allergen Fra a 1.08 (160 aa).

The protein belongs to the BetVI family. In terms of processing, phosphorylated in vivo. Phosphorylation prevents its activity as ribonuclease. In terms of tissue distribution, highly expressed in roots. Expressed a low levels in ripe red fruits.

Possesses ribonuclease activity in vitro. The chain is Major strawberry allergen Fra a 1.08 from Fragaria ananassa (Strawberry).